The primary structure comprises 189 residues: Large ribosomal subunit protein uL5 (189 aa).

It belongs to the universal ribosomal protein uL5 family. As to quaternary structure, part of the 50S ribosomal subunit; part of the 5S rRNA/L5/L18/L25 subcomplex. Contacts the 5S rRNA and the P site tRNA. Forms a bridge to the 30S subunit in the 70S ribosome.

This is one of the proteins that bind and probably mediate the attachment of the 5S RNA into the large ribosomal subunit, where it forms part of the central protuberance. In the 70S ribosome it contacts protein S13 of the 30S subunit (bridge B1b), connecting the 2 subunits; this bridge is implicated in subunit movement. Contacts the P site tRNA; the 5S rRNA and some of its associated proteins might help stabilize positioning of ribosome-bound tRNAs. The sequence is that of Large ribosomal subunit protein uL5 from Kocuria rhizophila (strain ATCC 9341 / DSM 348 / NBRC 103217 / DC2201).